The following is a 456-amino-acid chain: Argininosuccinate lyase (456 aa).

It belongs to the lyase 1 family. Argininosuccinate lyase subfamily.

The protein resides in the cytoplasm. The enzyme catalyses 2-(N(omega)-L-arginino)succinate = fumarate + L-arginine. It participates in amino-acid biosynthesis; L-arginine biosynthesis; L-arginine from L-ornithine and carbamoyl phosphate: step 3/3. This is Argininosuccinate lyase from Listeria monocytogenes serotype 4b (strain F2365).